The following is a 174-amino-acid chain: Peptide methionine sulfoxide reductase MsrA (174 aa).

Cys-10 is an active-site residue.

Belongs to the MsrA Met sulfoxide reductase family.

It carries out the reaction L-methionyl-[protein] + [thioredoxin]-disulfide + H2O = L-methionyl-(S)-S-oxide-[protein] + [thioredoxin]-dithiol. The enzyme catalyses [thioredoxin]-disulfide + L-methionine + H2O = L-methionine (S)-S-oxide + [thioredoxin]-dithiol. Its function is as follows. Has an important function as a repair enzyme for proteins that have been inactivated by oxidation. Catalyzes the reversible oxidation-reduction of methionine sulfoxide in proteins to methionine. This is Peptide methionine sulfoxide reductase MsrA from Arthrobacter sp. (strain FB24).